Reading from the N-terminus, the 879-residue chain is Phosphoenolpyruvate carboxylase (879 aa).

Active-site residues include H138 and K545.

Belongs to the PEPCase type 1 family. Requires Mg(2+) as cofactor.

It catalyses the reaction oxaloacetate + phosphate = phosphoenolpyruvate + hydrogencarbonate. Forms oxaloacetate, a four-carbon dicarboxylic acid source for the tricarboxylic acid cycle. This chain is Phosphoenolpyruvate carboxylase, found in Histophilus somni (strain 2336) (Haemophilus somnus).